The primary structure comprises 569 residues: AA9 family lytic polysaccharide monooxygenase A (569 aa).

A signal peptide spans 1–16 (MRIFSLALGFLPLVAG). Residues His17 and His99 each contribute to the Cu(2+) site. The cysteines at positions 59 and 189 are disulfide-linked. A glycan (N-linked (GlcNAc...) asparagine) is linked at Asn112. O2 contacts are provided by His174 and Gln184. Tyr186 provides a ligand contact to Cu(2+). 2 N-linked (GlcNAc...) asparagine glycosylation sites follow: Asn244 and Asn381. Positions 399-424 (AADATATATATTEDAEATTAAEAAAT) are enriched in low complexity. Positions 399–439 (AADATATATATTEDAEATTAAEAAATSGAGRPGRGHGHGRG) are disordered. N-linked (GlcNAc...) asparagine glycosylation is present at Asn472.

It belongs to the polysaccharide monooxygenase AA9 family. The cofactor is Cu(2+).

Its subcellular location is the secreted. The catalysed reaction is [(1-&gt;4)-beta-D-glucosyl]n+m + reduced acceptor + O2 = 4-dehydro-beta-D-glucosyl-[(1-&gt;4)-beta-D-glucosyl]n-1 + [(1-&gt;4)-beta-D-glucosyl]m + acceptor + H2O.. Functionally, lytic polysaccharide monooxygenase (LPMO) that depolymerizes crystalline and amorphous polysaccharides via the oxidation of scissile alpha- or beta-(1-4)-glycosidic bonds, yielding C4 oxidation products. Catalysis by LPMOs requires the reduction of the active-site copper from Cu(II) to Cu(I) by a reducing agent and H(2)O(2) or O(2) as a cosubstrate. This Emericella nidulans (strain FGSC A4 / ATCC 38163 / CBS 112.46 / NRRL 194 / M139) (Aspergillus nidulans) protein is AA9 family lytic polysaccharide monooxygenase A.